Reading from the N-terminus, the 155-residue chain is uncharacterized protein (155 aa).

This is an uncharacterized protein from Acanthamoeba polyphaga (Amoeba).